A 145-amino-acid polypeptide reads, in one-letter code: Ribonuclease H (145 aa).

Positions 1 to 141 (MQEVTIYSDG…ADALANRGVE (141 aa)) constitute an RNase H type-1 domain. Positions 9, 47, 69, and 133 each coordinate Mg(2+).

Belongs to the RNase H family. As to quaternary structure, monomer. Mg(2+) is required as a cofactor.

The protein localises to the cytoplasm. It carries out the reaction Endonucleolytic cleavage to 5'-phosphomonoester.. Endonuclease that specifically degrades the RNA of RNA-DNA hybrids. The chain is Ribonuclease H from Cupriavidus necator (strain ATCC 17699 / DSM 428 / KCTC 22496 / NCIMB 10442 / H16 / Stanier 337) (Ralstonia eutropha).